Consider the following 369-residue polypeptide: tRNA/tmRNA (uracil-C(5))-methyltransferase (369 aa).

S-adenosyl-L-methionine-binding residues include Q192, Y221, N226, E242, and D302. Residue C327 is the Nucleophile of the active site. E361 (proton acceptor) is an active-site residue.

This sequence belongs to the class I-like SAM-binding methyltransferase superfamily. RNA M5U methyltransferase family. TrmA subfamily.

It catalyses the reaction uridine(54) in tRNA + S-adenosyl-L-methionine = 5-methyluridine(54) in tRNA + S-adenosyl-L-homocysteine + H(+). It carries out the reaction uridine(341) in tmRNA + S-adenosyl-L-methionine = 5-methyluridine(341) in tmRNA + S-adenosyl-L-homocysteine + H(+). Dual-specificity methyltransferase that catalyzes the formation of 5-methyluridine at position 54 (m5U54) in all tRNAs, and that of position 341 (m5U341) in tmRNA (transfer-mRNA). The polypeptide is tRNA/tmRNA (uracil-C(5))-methyltransferase (Haemophilus ducreyi (strain 35000HP / ATCC 700724)).